A 383-amino-acid polypeptide reads, in one-letter code: NADH-quinone oxidoreductase subunit D 1 (383 aa).

This sequence belongs to the complex I 49 kDa subunit family. As to quaternary structure, NDH-1 is composed of 14 different subunits. Subunits NuoB, C, D, E, F, and G constitute the peripheral sector of the complex.

Its subcellular location is the cell membrane. The enzyme catalyses a quinone + NADH + 5 H(+)(in) = a quinol + NAD(+) + 4 H(+)(out). Its function is as follows. NDH-1 shuttles electrons from NADH, via FMN and iron-sulfur (Fe-S) centers, to quinones in the respiratory chain. The immediate electron acceptor for the enzyme in this species is believed to be a menaquinone. Couples the redox reaction to proton translocation (for every two electrons transferred, four hydrogen ions are translocated across the cytoplasmic membrane), and thus conserves the redox energy in a proton gradient. The protein is NADH-quinone oxidoreductase subunit D 1 of Streptomyces coelicolor (strain ATCC BAA-471 / A3(2) / M145).